The sequence spans 104 residues: N(4)-acetylcytidine amidohydrolase (104 aa).

Positions 6-96 (ITFYQRFEAD…TIYPNEHESW (91 aa)) constitute an ASCH domain. Catalysis depends on Lys21, which acts as the Proton acceptor. Thr24 functions as the Nucleophile in the catalytic mechanism. Residue Glu74 is the Proton donor of the active site.

It belongs to the N(4)-acetylcytidine amidohydrolase family.

The enzyme catalyses N(4)-acetylcytidine + H2O = cytidine + acetate + H(+). It carries out the reaction N(4)-acetyl-2'-deoxycytidine + H2O = 2'-deoxycytidine + acetate + H(+). The catalysed reaction is N(4)-acetylcytosine + H2O = cytosine + acetate + H(+). Functionally, catalyzes the hydrolysis of N(4)-acetylcytidine (ac4C). This Haemophilus influenzae (strain 86-028NP) protein is N(4)-acetylcytidine amidohydrolase.